The primary structure comprises 473 residues: MAMAAEQWVLVEMVQALYEAPAYHLILEGILILWIIRLVFSKTYKLQERSDLTAKEKEELIEEWQPEPLVPPVSKNHPALNYNIVSGPPTHNIVVNGKECVNFASFNFLGLLANPRVKAAALASLKKYGVGTCGPRGFYGTFDVHLDLEERLAKFMRTEEAIIYSYGFSTIASAIPAYSKRGDIVFVDSAACFAIQKGLQASRSDIKLFKHNDVADLERLLKEQEIEDQKNPRKARVTRRFIVVEGLYMNTGTVCPLPELVKLKYKYKARIFLEESLSFGVLGEHGRGVTEHYGISIDDIDLISANMENALASVGGFCCGRSFVVDHQRLSGQGYCFSASLPPLLAAAAIEALNIMEENPGIFAVLKKKCQHIHKSLQGISGLKVVGESLSPALHLQLEESTGSREKDVQLLQEMVIHCMNEGIALTQARYLDKEEKCLPPPSIRVVVTVEQTEEELERAASTIREAAQAVLL.

The Lumenal portion of the chain corresponds to 1-15 (MAMAAEQWVLVEMVQ). An interaction with SPTLC2 region spans residues 1–66 (MAMAAEQWVL…KEELIEEWQP (66 aa)). Residues 16 to 36 (ALYEAPAYHLILEGILILWII) form a helical membrane-spanning segment. Residues 37–473 (RLVFSKTYKL…IREAAQAVLL (437 aa)) lie on the Cytoplasmic side of the membrane. At Tyr-164 the chain carries Phosphotyrosine; by ABL.

Belongs to the class-II pyridoxal-phosphate-dependent aminotransferase family. Component of the serine palmitoyltransferase (SPT) complex, which is also composed of SPTLC2 or SPTLC3 and SPTSSA or SPTSSB. The heterodimer with SPTLC2 or SPTLC3 forms the catalytic core of the enzyme, while SPTSSA or SPTSSB subunits determine substrate specificity. SPT also interacts with ORMDL proteins, especially ORMDL3, which negatively regulate SPT activity in the presence of ceramides. Forms dimers of heterodimers with SPTLC2. Interacts with RTN4. Pyridoxal 5'-phosphate serves as cofactor. Phosphorylation at Tyr-164 inhibits activity and promotes cell survival.

The protein resides in the endoplasmic reticulum membrane. The catalysed reaction is L-serine + hexadecanoyl-CoA + H(+) = 3-oxosphinganine + CO2 + CoA. The enzyme catalyses octadecanoyl-CoA + L-serine + H(+) = 3-oxoeicosasphinganine + CO2 + CoA. It carries out the reaction tetradecanoyl-CoA + L-serine + H(+) = 3-oxohexadecasphinganine + CO2 + CoA. It catalyses the reaction dodecanoyl-CoA + L-serine + H(+) = 3-oxotetradecasphinganine + CO2 + CoA. It functions in the pathway lipid metabolism; sphingolipid metabolism. Its activity is regulated as follows. SPT complex catalytic activity is negatively regulated by ORMDL proteins, including ORMDL3, in the presence of ceramides. This mechanism allows to maintain ceramide levels at sufficient concentrations for the production of complex sphingolipids, but which prevents the accumulation of ceramides to levels that trigger apoptosis. In terms of biological role, component of the serine palmitoyltransferase multisubunit enzyme (SPT) that catalyzes the initial and rate-limiting step in sphingolipid biosynthesis by condensing L-serine and activated acyl-CoA (most commonly palmitoyl-CoA) to form long-chain bases. The SPT complex is also composed of SPTLC2 or SPTLC3 and SPTSSA or SPTSSB. Within this complex, the heterodimer with SPTLC2 or SPTLC3 forms the catalytic core. The composition of the serine palmitoyltransferase (SPT) complex determines the substrate preference. The SPTLC1-SPTLC2-SPTSSA complex shows a strong preference for C16-CoA substrate, while the SPTLC1-SPTLC3-SPTSSA isozyme uses both C14-CoA and C16-CoA as substrates, with a slight preference for C14-CoA. The SPTLC1-SPTLC2-SPTSSB complex shows a strong preference for C18-CoA substrate, while the SPTLC1-SPTLC3-SPTSSB isozyme displays an ability to use a broader range of acyl-CoAs, without apparent preference. Required for adipocyte cell viability and metabolic homeostasis. This Cricetulus griseus (Chinese hamster) protein is Serine palmitoyltransferase 1 (SPTLC1).